The chain runs to 329 residues: Peroxidase 51 (329 aa).

An N-terminal signal peptide occupies residues 1-25; the sequence is MVVMNKTNLLLLILSLFLAINLSSA. 4 disulfide bridges follow: cysteine 36/cysteine 119, cysteine 69/cysteine 74, cysteine 125/cysteine 325, and cysteine 204/cysteine 236. Histidine 67 (proton acceptor) is an active-site residue. Ca(2+)-binding residues include aspartate 68, valine 71, glycine 73, aspartate 75, and serine 77. Position 167 (proline 167) interacts with substrate. Histidine 197 provides a ligand contact to heme b. Threonine 198 serves as a coordination point for Ca(2+). An N-linked (GlcNAc...) asparagine glycan is attached at asparagine 215. The Ca(2+) site is built by aspartate 249, threonine 252, and aspartate 257.

This sequence belongs to the peroxidase family. Classical plant (class III) peroxidase subfamily. It depends on heme b as a cofactor. Requires Ca(2+) as cofactor.

It is found in the secreted. It catalyses the reaction 2 a phenolic donor + H2O2 = 2 a phenolic radical donor + 2 H2O. Its function is as follows. Removal of H(2)O(2), oxidation of toxic reductants, biosynthesis and degradation of lignin, suberization, auxin catabolism, response to environmental stresses such as wounding, pathogen attack and oxidative stress. These functions might be dependent on each isozyme/isoform in each plant tissue. The protein is Peroxidase 51 (PER51) of Arabidopsis thaliana (Mouse-ear cress).